A 250-amino-acid chain; its full sequence is 3-deoxy-manno-octulosonate cytidylyltransferase (250 aa).

It belongs to the KdsB family.

It is found in the cytoplasm. It carries out the reaction 3-deoxy-alpha-D-manno-oct-2-ulosonate + CTP = CMP-3-deoxy-beta-D-manno-octulosonate + diphosphate. It functions in the pathway nucleotide-sugar biosynthesis; CMP-3-deoxy-D-manno-octulosonate biosynthesis; CMP-3-deoxy-D-manno-octulosonate from 3-deoxy-D-manno-octulosonate and CTP: step 1/1. It participates in bacterial outer membrane biogenesis; lipopolysaccharide biosynthesis. Its function is as follows. Activates KDO (a required 8-carbon sugar) for incorporation into bacterial lipopolysaccharide in Gram-negative bacteria. This is 3-deoxy-manno-octulosonate cytidylyltransferase from Sinorhizobium medicae (strain WSM419) (Ensifer medicae).